The following is a 20-amino-acid chain: Transcriptional regulatory protein PufK (20 aa).

A compositionally biased stretch (basic residues) spans Met1–His11. Residues Met1–Gly20 are disordered.

Its function is as follows. Involved in the transcriptional regulation of pufB. This is Transcriptional regulatory protein PufK (pufK) from Cereibacter sphaeroides (strain ATCC 17023 / DSM 158 / JCM 6121 / CCUG 31486 / LMG 2827 / NBRC 12203 / NCIMB 8253 / ATH 2.4.1.) (Rhodobacter sphaeroides).